The chain runs to 454 residues: tRNA modification GTPase MnmE (454 aa).

(6S)-5-formyl-5,6,7,8-tetrahydrofolate is bound by residues Arg23, Glu80, and Lys120. The region spanning 216 to 377 (GMKVVIAGRP…LRNNLKQSMG (162 aa)) is the TrmE-type G domain. Asn226 lines the K(+) pocket. GTP contacts are provided by residues 226–231 (NAGKSS), 245–251 (TDIAGTT), 270–273 (DTAG), 335–338 (NKAD), and 358–360 (SAR). Residue Ser230 participates in Mg(2+) binding. K(+) contacts are provided by Thr245, Ile247, and Thr250. Thr251 contacts Mg(2+). Residue Lys454 coordinates (6S)-5-formyl-5,6,7,8-tetrahydrofolate.

It belongs to the TRAFAC class TrmE-Era-EngA-EngB-Septin-like GTPase superfamily. TrmE GTPase family. Homodimer. Heterotetramer of two MnmE and two MnmG subunits. The cofactor is K(+).

The protein localises to the cytoplasm. Exhibits a very high intrinsic GTPase hydrolysis rate. Involved in the addition of a carboxymethylaminomethyl (cmnm) group at the wobble position (U34) of certain tRNAs, forming tRNA-cmnm(5)s(2)U34. This is tRNA modification GTPase MnmE from Salmonella paratyphi A (strain AKU_12601).